Consider the following 740-residue polypeptide: DNA ligase (740 aa).

Residues 1–20 form a disordered region; that stretch reads MGPGLTLSGMTEQSSLFPAP. NAD(+) is bound by residues 56–60, 105–106, and E142; these read DAEYD and SI. The active-site N6-AMP-lysine intermediate is K144. Positions 165, 201, 322, and 346 each coordinate NAD(+). The Zn(2+) site is built by C471, C474, C489, and C495. The BRCT domain maps to 654–740; that stretch reads AATLPLAGMT…RGAPPNAGGG (87 aa).

Belongs to the NAD-dependent DNA ligase family. LigA subfamily. Mg(2+) serves as cofactor. Requires Mn(2+) as cofactor.

It catalyses the reaction NAD(+) + (deoxyribonucleotide)n-3'-hydroxyl + 5'-phospho-(deoxyribonucleotide)m = (deoxyribonucleotide)n+m + AMP + beta-nicotinamide D-nucleotide.. DNA ligase that catalyzes the formation of phosphodiester linkages between 5'-phosphoryl and 3'-hydroxyl groups in double-stranded DNA using NAD as a coenzyme and as the energy source for the reaction. It is essential for DNA replication and repair of damaged DNA. The sequence is that of DNA ligase from Acidovorax ebreus (strain TPSY) (Diaphorobacter sp. (strain TPSY)).